The following is a 443-amino-acid chain: Histone deacetylase 10, chloroplastic (443 aa).

Residues M1–D65 constitute a chloroplast transit peptide. A histone deacetylase region spans residues D82–L412. H222 serves as the catalytic Proton donor/acceptor. 3 residues coordinate Zn(2+): D259, H261, and D346.

It belongs to the histone deacetylase family. Zn(2+) is required as a cofactor. Expressed in leaves. Expressed in coleoptiles, leaves, flag leaves and flowers. Expressed at low levels in roots.

The protein resides in the plastid. It is found in the chloroplast. Its subcellular location is the mitochondrion. The enzyme catalyses N-acetylserotonin + H2O = serotonin + acetate. The catalysed reaction is N-acetyltyramine + H2O = tyramine + acetate. It carries out the reaction N-acetyltryptamine + H2O = tryptamine + acetate. It catalyses the reaction melatonin + H2O = 5-methoxytryptamine + acetate. The activity of this enzyme is not inhibited by butyrate, a well-known histone deacetylase inhibitor. Functionally, involved in the regulation of melatonin biosynthesis by catalyzing the deacetylation of N-acetylserotonin to produce serotonin. N-acetylserotonin is methylated by acetylserotonin O-methyltransferase (ASMT) to produce melatonin (N-acetyl-5-methoxytryptamine). Deacetylates melatonin to produce 5-methoxytryptamine. In vitro, deacetylates N-acetyltyramine and N-acetyltryptamine to produce tyramine and tryptamine, respectively. The chain is Histone deacetylase 10, chloroplastic from Oryza sativa subsp. japonica (Rice).